The primary structure comprises 66 residues: Ribosome biogenesis protein Nop10 (66 aa).

It belongs to the NOP10 family.

Involved in ribosome biogenesis; more specifically in 18S rRNA pseudouridylation and in cleavage of pre-rRNA. This chain is Ribosome biogenesis protein Nop10, found in Desulfurococcus amylolyticus (strain DSM 18924 / JCM 16383 / VKM B-2413 / 1221n) (Desulfurococcus kamchatkensis).